Here is a 554-residue protein sequence, read N- to C-terminus: Protein SINE2 (554 aa).

The ARMADILLO-type fold stretch occupies residues 17 to 290 (DKDPDSHKTA…MAAHETMRQA (274 aa)). Disordered regions lie at residues 306–332 (CKPR…VYSR), 411–442 (NESV…KHHR), and 465–487 (ETSS…TTED). The span at 311–321 (SLSGSVKSTSS) shows a compositional bias: low complexity. Positions 322–332 (LREHDGSVYSR) are enriched in basic and acidic residues. Basic residues predominate over residues 419 to 431 (NRSRSSRRNTKKR). Residues 465-485 (ETSSSSSIYDTSGTTTPTNTT) show a composition bias toward low complexity. Positions 509 to 554 (LDPRLGRSKGVLKLGLSVFSIAVAGFASFMWMYLQDDMMPPHLVPT) constitute a KASH domain. Residues 522 to 542 (LGLSVFSIAVAGFASFMWMYL) traverse the membrane as a helical segment. The Required for nuclear localization signature appears at 551–554 (LVPT).

In terms of assembly, interacts with SUN1 and SUN2. As to expression, expressed in epidermal cells, mesophyll cells, trichomes and root cells.

It localises to the nucleus membrane. Its function is as follows. Plays a role in innate immunity against the oomycete pathogen A.arabidopsidis (Hpa). The sequence is that of Protein SINE2 from Arabidopsis thaliana (Mouse-ear cress).